The following is a 1613-amino-acid chain: MLHVAQEEARLDLLKQLKERLQSRLDKDKAAEVDTFAHLFYAAVPLEDLADRRLDDLYGATLSVWHFIQQFDPEAPKVRVLNPDFEEHGWQSTHTFIAVLHEDMPFLVDSVRVELNRRGMTVHAIHNAVLAVGRDDEHRLQRVASPEETDAPEARESLIAIEVDRHSNPAELEEIEASLLEVLREVRTAVSDFDPMRAQARAAIEELEATRPAQVDPADHREAIEFLQWLLQDNFTFLGYDEYEVREDQGRQRLDKVQNSELGVFRLDQPRYRERIRTDLGVEGDHYVPMPQLMSFAKSAHHARIHRPTYPDYISIDRYDDQGRVIGERRFLGMFTATVYNESPRNVPILRRKLQAVMDIAGFSPKGHNGKQLLQILEVYPRDDLFQIDIEELAQTALGILDIRERRRVRLFIREDTFGKFYSCLVFVPRDVFSTELRVRLQELLCEELDATFGDFNTYLSESVLARIQFILRFNGEKPVEYDIKRLEEKLVKLARNWRDDLLNASIEGFGEESANLLMSRFRDAFPASYREDFSARTAVYDLQHIGELDEGAPLALSLYRLIEEEGSGVNLKLFHRGAPIPLSDVLPMMENLGLRVIGERPYEVQASDASYWIHDFNLEHHTSVEMNLQEMRGPFIEAFQRIWAGEADNDAFNRLIIGANLDWREVAMLRAYARYLKQIRFGMSQDYIATTLGSHPEITRELVSLFELRFDPAERPGEGDIEECESRILTLLDEVPSLNDDQLLRRYMELIKATLRTNYYQRTEEGRYKDYLAFKLDPSQVSGIPKPCPAYEIFVCSPRVEGVHLRGGKVARGGLRWSDRHEDFRTEVLGLVKAQQVKNAVIVPMGAKGGFVCKRMPEGADREATQKEGIACYQIFIRALLDVTDNLVGGEVVPPRDVVRHDDNDPYLVVAADKGTATFSDIANEISTEYGHWLGDAFASGGANGYDHKKMAITAKGAWESVKRHFRGLGVNTQEDEFSVVGIGDMAGDVFGNGMLLSDKIRLVGAFNHLHIFVDPTPDAAASFAERQRLFDMPRSSWEDYNTELISEGGGIFPRSAKSITITPQMKKVFGIREDKLSPNELIRAMLVSKVDLVWNGGIGTYVKSSEETDAEVGDKANDALRIDGRELNCRVVGEGGNLGLTQRGRMEAAAKGVRVNTDFIDNAGGVNCSDHEVNIKILIDEVVSRGDLTEKQRNQLLADMTDEVSELVLLDNYRQTQALDLAELLSRQGIGPYRRFISELEAAGQIDRELEFLPSDEELLERTQHNQGMTLPELSVLISYAKSVLKGDLIASDVPDDPTIMRFVERVFPSMLAERYRDEMYEHRLKREIVATQVANDLVDYMGVVFVRRLMDSTGADRADIARAYVIARDSFQLPRLWEQIEALDNKVPSQVQYSMMLDLMRMLRRSTRWFLRQRTGMSTRDTIDYFAPRLAQLQENIGKRLRGEEQEQWSARRQELVKAGVPEALASTVAAAGSLYAALGIIQTARQTDEKPQRVAEIFYEVGARLELPWIIQQVTRLEVRDGWQAKARDTFRDDIDRQQLALTASVLGMDGGPRDSAERVDRWLSLHEGMHQRWRHLLEEVGSGSQGGFPLFAVAVRELVDLAESNSEA.

K849 is an active-site residue.

It belongs to the Glu/Leu/Phe/Val dehydrogenases family.

The catalysed reaction is L-glutamate + NAD(+) + H2O = 2-oxoglutarate + NH4(+) + NADH + H(+). Its function is as follows. Involved in arginine catabolism by converting L-glutamate, into 2-oxoglutarate, which is then channeled into the tricarboxylic acid cycle. In Halomonas elongata (strain ATCC 33173 / DSM 2581 / NBRC 15536 / NCIMB 2198 / 1H9), this protein is NAD-specific glutamate dehydrogenase.